Reading from the N-terminus, the 61-residue chain is Small ribosomal subunit protein uS14B (61 aa).

Zn(2+)-binding residues include Cys24, Cys27, Cys40, and Cys43.

Belongs to the universal ribosomal protein uS14 family. Zinc-binding uS14 subfamily. Part of the 30S ribosomal subunit. Contacts proteins S3 and S10. It depends on Zn(2+) as a cofactor.

Functionally, binds 16S rRNA, required for the assembly of 30S particles and may also be responsible for determining the conformation of the 16S rRNA at the A site. The polypeptide is Small ribosomal subunit protein uS14B (Shouchella clausii (strain KSM-K16) (Alkalihalobacillus clausii)).